We begin with the raw amino-acid sequence, 387 residues long: Formate-dependent phosphoribosylglycinamide formyltransferase (387 aa).

Residues 15–16 (EL) and E75 each bind N(1)-(5-phospho-beta-D-ribosyl)glycinamide. ATP is bound by residues R106, K147, 152-157 (SSGKGQ), 187-190 (EEFI), and E195. Residues 111 to 301 (DLASNELNIR…EFELHLRAVL (191 aa)) form the ATP-grasp domain. Mg(2+) contacts are provided by E260 and E272. N(1)-(5-phospho-beta-D-ribosyl)glycinamide contacts are provided by residues D279, K349, and 356-357 (RR).

This sequence belongs to the PurK/PurT family. Homodimer.

It carries out the reaction N(1)-(5-phospho-beta-D-ribosyl)glycinamide + formate + ATP = N(2)-formyl-N(1)-(5-phospho-beta-D-ribosyl)glycinamide + ADP + phosphate + H(+). It functions in the pathway purine metabolism; IMP biosynthesis via de novo pathway; N(2)-formyl-N(1)-(5-phospho-D-ribosyl)glycinamide from N(1)-(5-phospho-D-ribosyl)glycinamide (formate route): step 1/1. Functionally, involved in the de novo purine biosynthesis. Catalyzes the transfer of formate to 5-phospho-ribosyl-glycinamide (GAR), producing 5-phospho-ribosyl-N-formylglycinamide (FGAR). Formate is provided by PurU via hydrolysis of 10-formyl-tetrahydrofolate. The chain is Formate-dependent phosphoribosylglycinamide formyltransferase from Prochlorococcus marinus (strain NATL1A).